Reading from the N-terminus, the 625-residue chain is Cysteine-rich receptor-like protein kinase 46 (625 aa).

A signal peptide spans 1–23; the sequence is MASTLISSLAVVLPLTLLAPSMS. Residues 24-252 lie on the Extracellular side of the membrane; that stretch reads MKISRIDVLG…LLAMSFTKEN (229 aa). Gnk2-homologous domains lie at 29–130 and 135–237; these read IDVL…NYSF and VSHQ…NYTF. 4 N-linked (GlcNAc...) asparagine glycosylation sites follow: N38, N127, N234, and N252. Residues 253 to 273 traverse the membrane as a helical segment; the sequence is LTYIFVISMVGVLAIAAGFWC. Topologically, residues 274–625 are cytoplasmic; it reads GKCFYMRTSP…TKPPFLHDSM (352 aa). The Protein kinase domain maps to 331 to 621; it reads FNESCKLGVG…LPTPTKPPFL (291 aa). ATP contacts are provided by residues 337 to 345 and K359; that span reads LGVGGYGEV. The residue at position 404 (Y404) is a Phosphotyrosine. Catalysis depends on D454, which acts as the Proton acceptor. A Phosphoserine modification is found at S458. T499 is modified (phosphothreonine). Y507 carries the phosphotyrosine modification.

This sequence belongs to the protein kinase superfamily. Ser/Thr protein kinase family. CRK subfamily.

It is found in the membrane. It catalyses the reaction L-seryl-[protein] + ATP = O-phospho-L-seryl-[protein] + ADP + H(+). The catalysed reaction is L-threonyl-[protein] + ATP = O-phospho-L-threonyl-[protein] + ADP + H(+). The polypeptide is Cysteine-rich receptor-like protein kinase 46 (Arabidopsis thaliana (Mouse-ear cress)).